The chain runs to 737 residues: Catalase-peroxidase (737 aa).

The segment at residues tryptophan 102–tyrosine 225 is a cross-link (tryptophyl-tyrosyl-methioninium (Trp-Tyr) (with M-251)). The Proton acceptor role is filled by histidine 103. A cross-link (tryptophyl-tyrosyl-methioninium (Tyr-Met) (with W-102)) is located at residues tyrosine 225–methionine 251. Histidine 266 contributes to the heme b binding site.

It belongs to the peroxidase family. Peroxidase/catalase subfamily. As to quaternary structure, homodimer or homotetramer. It depends on heme b as a cofactor. Post-translationally, formation of the three residue Trp-Tyr-Met cross-link is important for the catalase, but not the peroxidase activity of the enzyme.

It carries out the reaction H2O2 + AH2 = A + 2 H2O. It catalyses the reaction 2 H2O2 = O2 + 2 H2O. Functionally, bifunctional enzyme with both catalase and broad-spectrum peroxidase activity. The chain is Catalase-peroxidase from Caulobacter sp. (strain K31).